Reading from the N-terminus, the 919-residue chain is Isoleucine--tRNA ligase (919 aa).

Residues 59 to 69 carry the 'HIGH' region motif; it reads PYANGHLHIGH. Position 570 (glutamate 570) interacts with L-isoleucyl-5'-AMP. Positions 611-615 match the 'KMSKS' region motif; that stretch reads KMSKS. Lysine 614 is a binding site for ATP. The Zn(2+) site is built by cysteine 893, cysteine 896, cysteine 908, and cysteine 911.

This sequence belongs to the class-I aminoacyl-tRNA synthetase family. IleS type 1 subfamily. As to quaternary structure, monomer. Requires Zn(2+) as cofactor.

The protein resides in the cytoplasm. It catalyses the reaction tRNA(Ile) + L-isoleucine + ATP = L-isoleucyl-tRNA(Ile) + AMP + diphosphate. Its function is as follows. Catalyzes the attachment of isoleucine to tRNA(Ile). As IleRS can inadvertently accommodate and process structurally similar amino acids such as valine, to avoid such errors it has two additional distinct tRNA(Ile)-dependent editing activities. One activity is designated as 'pretransfer' editing and involves the hydrolysis of activated Val-AMP. The other activity is designated 'posttransfer' editing and involves deacylation of mischarged Val-tRNA(Ile). The protein is Isoleucine--tRNA ligase of Campylobacter curvus (strain 525.92).